Reading from the N-terminus, the 238-residue chain is Xyloglucan-specific endo-beta-1,4-glucanase A (238 aa).

Residues 1 to 14 form the signal peptide; that stretch reads MKLSLLSLATLASA.

Belongs to the glycosyl hydrolase 12 (cellulase H) family.

The protein resides in the secreted. It carries out the reaction xyloglucan + H2O = xyloglucan oligosaccharides.. In terms of biological role, catalyzes endohydrolysis of 1,4-beta-D-glucosidic linkages in xyloglucan with retention of the beta-configuration of the glycosyl residues. Specific for xyloglucan and does not hydrolyze other cell wall components. The polypeptide is Xyloglucan-specific endo-beta-1,4-glucanase A (xgeA) (Aspergillus aculeatus).